The primary structure comprises 288 residues: Nucleotide-binding protein Pcar_1935 (288 aa).

ATP is bound at residue 11 to 18; that stretch reads GLSGSGKT. 62-65 is a binding site for GTP; sequence DVRN.

Belongs to the RapZ-like family.

Functionally, displays ATPase and GTPase activities. The protein is Nucleotide-binding protein Pcar_1935 of Syntrophotalea carbinolica (strain DSM 2380 / NBRC 103641 / GraBd1) (Pelobacter carbinolicus).